A 108-amino-acid polypeptide reads, in one-letter code: uncharacterized protein (108 aa).

Residue Gly-2 is the site of N-myristoyl glycine; by host attachment.

This is an uncharacterized protein from Acanthamoeba polyphaga (Amoeba).